Consider the following 449-residue polypeptide: GTPase Der (449 aa).

EngA-type G domains lie at 4–174 (PIVA…PPKT) and 183–358 (LRVA…AQRQ). GTP-binding positions include 10-17 (GRPNVGKS), 57-61 (DTAGL), 126-129 (NKCD), 189-196 (GRPNVGKS), 236-240 (DTAGI), and 301-304 (NKWD). The 86-residue stretch at 359–444 (KRIPTSELNN…PIVIVFRSRE (86 aa)) folds into the KH-like domain.

It belongs to the TRAFAC class TrmE-Era-EngA-EngB-Septin-like GTPase superfamily. EngA (Der) GTPase family. Associates with the 50S ribosomal subunit.

Its function is as follows. GTPase that plays an essential role in the late steps of ribosome biogenesis. The sequence is that of GTPase Der from Chloroflexus aggregans (strain MD-66 / DSM 9485).